Consider the following 307-residue polypeptide: Auxiliary protein GraX (307 aa).

In terms of assembly, homodimer. Interacts with GraR and GraS.

Plays a role in resistance against cationic antimicrobial peptides (CAMPs). Facilitates the activation of GraS to transduce the signal to GraR. This chain is Auxiliary protein GraX (graX), found in Staphylococcus aureus (strain NCTC 8325 / PS 47).